The chain runs to 214 residues: ATP phosphoribosyltransferase (214 aa).

This sequence belongs to the ATP phosphoribosyltransferase family. Short subfamily. In terms of assembly, heteromultimer composed of HisG and HisZ subunits.

It localises to the cytoplasm. It catalyses the reaction 1-(5-phospho-beta-D-ribosyl)-ATP + diphosphate = 5-phospho-alpha-D-ribose 1-diphosphate + ATP. Its pathway is amino-acid biosynthesis; L-histidine biosynthesis; L-histidine from 5-phospho-alpha-D-ribose 1-diphosphate: step 1/9. Its function is as follows. Catalyzes the condensation of ATP and 5-phosphoribose 1-diphosphate to form N'-(5'-phosphoribosyl)-ATP (PR-ATP). Has a crucial role in the pathway because the rate of histidine biosynthesis seems to be controlled primarily by regulation of HisG enzymatic activity. The polypeptide is ATP phosphoribosyltransferase (Lysinibacillus sphaericus (strain C3-41)).